We begin with the raw amino-acid sequence, 329 residues long: Acetyl-coenzyme A carboxylase carboxyl transferase subunit alpha (329 aa).

The CoA carboxyltransferase C-terminal domain maps to 40-294 (QLETLAARRR…REAIERHLDE (255 aa)).

This sequence belongs to the AccA family. As to quaternary structure, acetyl-CoA carboxylase is a heterohexamer composed of biotin carboxyl carrier protein (AccB), biotin carboxylase (AccC) and two subunits each of ACCase subunit alpha (AccA) and ACCase subunit beta (AccD).

The protein resides in the cytoplasm. The enzyme catalyses N(6)-carboxybiotinyl-L-lysyl-[protein] + acetyl-CoA = N(6)-biotinyl-L-lysyl-[protein] + malonyl-CoA. Its pathway is lipid metabolism; malonyl-CoA biosynthesis; malonyl-CoA from acetyl-CoA: step 1/1. Functionally, component of the acetyl coenzyme A carboxylase (ACC) complex. First, biotin carboxylase catalyzes the carboxylation of biotin on its carrier protein (BCCP) and then the CO(2) group is transferred by the carboxyltransferase to acetyl-CoA to form malonyl-CoA. This is Acetyl-coenzyme A carboxylase carboxyl transferase subunit alpha from Prochlorococcus marinus (strain MIT 9313).